Here is a 273-residue protein sequence, read N- to C-terminus: Probable cysteine-rich repeat secretory protein 6 (273 aa).

Positions 1 to 21 (MTRIIDVSLFCFFLFSLGAMS) are cleaved as a signal peptide. Gnk2-homologous domains are found at residues 22-122 (QPSQ…DNSF) and 128-241 (DSPA…ISAL).

The protein belongs to the cysteine-rich repeat secretory protein family.

The protein resides in the secreted. This chain is Probable cysteine-rich repeat secretory protein 6 (CRRSP6), found in Arabidopsis thaliana (Mouse-ear cress).